We begin with the raw amino-acid sequence, 436 residues long: F-box/LRR-repeat protein 20 (436 aa).

Residues Ala22–Ile68 enclose the F-box domain. 13 LRR repeats span residues Gln74–Gly100, Cys101–Gly126, Cys127–Ser152, Cys153–Trp178, Cys179–Gly204, Cys205–Thr230, Cys231–Gly256, Cys257–Arg282, Cys283–Glu308, Cys309–His334, Cys335–Asn363, Cys364–Asp388, and Cys389–Ala414. The residue at position 417 (Thr417) is a Phosphothreonine. At Ser421 the chain carries Phosphoserine.

In terms of assembly, interacts with SKP1 and CUL1.

It localises to the cytoplasm. Its function is as follows. Substrate-recognition component of the SCF (SKP1-CUL1-F-box protein)-type E3 ubiquitin ligase complex. Role in neural transmission. The polypeptide is F-box/LRR-repeat protein 20 (FBXL20) (Bos taurus (Bovine)).